Reading from the N-terminus, the 257-residue chain is MEGMAQHPVPRTVEEVFSDYKGRRAGLIKALTTDVEKFYQLVDPEKENLCLYGFPNETWEVNLPVEEVPPELPEPALGINFARDGMQEKDWLSLVAVHSDSWLLAVAFYFGARFGFGKNDRKRLFQMINDLPTVFELATGTAKQSKDQLTAHNNGSNSKYKSSGKSRQSESQTKGVKMSAPVKEEVDSGEEEEEDDDEQGATCGACGDNYGTDEFWICCDMCEKWFHGKCVKITPAKAEHIKQYKCPGCSIKKPRIG.

The interval 145 to 200 (SKDQLTAHNNGSNSKYKSSGKSRQSESQTKGVKMSAPVKEEVDSGEEEEEDDDEQG) is disordered. The span at 153–166 (NNGSNSKYKSSGKS) shows a compositional bias: low complexity. Over residues 187–199 (DSGEEEEEDDDEQ) the composition is skewed to acidic residues. A PHD-type zinc finger spans residues 200–252 (GATCGACGDNYGTDEFWICCDMCEKWFHGKCVKITPAKAEHIKQYKCPGCSIK).

Belongs to the Alfin family. In terms of assembly, interacts with H3K4me3 and to a lesser extent with H3K4me2. In terms of tissue distribution, predominantly expressed in the roots.

Its subcellular location is the nucleus. Its function is as follows. Histone-binding component that specifically recognizes H3 tails trimethylated on 'Lys-4' (H3K4me3), which mark transcription start sites of virtually all active genes. Transcriptional regulator that binds specifically to DNA sequences 5'-GNGGTG-3' or 5'-GTGGNG-3', including promoter elements of the salt-inducible PRP2 gene. Plays a role in salinity tolerance. In Medicago sativa (Alfalfa), this protein is PHD finger protein Alfin1 (ALFIN-1).